The primary structure comprises 293 residues: ATP synthase gamma chain (293 aa).

It belongs to the ATPase gamma chain family. As to quaternary structure, F-type ATPases have 2 components, CF(1) - the catalytic core - and CF(0) - the membrane proton channel. CF(1) has five subunits: alpha(3), beta(3), gamma(1), delta(1), epsilon(1). CF(0) has three main subunits: a, b and c.

It is found in the cell inner membrane. Its function is as follows. Produces ATP from ADP in the presence of a proton gradient across the membrane. The gamma chain is believed to be important in regulating ATPase activity and the flow of protons through the CF(0) complex. The chain is ATP synthase gamma chain from Psychrobacter sp. (strain PRwf-1).